The sequence spans 956 residues: Glutamate receptor ionotropic, kainate 4 (956 aa).

A signal peptide spans 1-20; sequence MPRVSAPLVLLPAWLLMVAC. Residues 21-545 are Extracellular-facing; it reads SPHSLRIAAI…YFSFLDPFSP (525 aa). N-linked (GlcNAc...) asparagine glycans are attached at residues N158, N220, N272, N286, N323, N408, N415, and N479. L-glutamate is bound by residues G500, T502, and R507. A helical membrane pass occupies residues 546–566; it reads GVWLFMLLAYLAVSCVLFLVA. At 567-623 the chain is on the cytoplasmic side; the sequence is RLTPYEWYSPHPCAQGRCNLLVNQYSLGNSLWFPVGGFMQQGSTIAPRALSTRCVSG. The chain crosses the membrane as a helical span at residues 624 to 644; the sequence is VWWAFTLIIISSYTANLAAFL. Residues 645-804 are Extracellular-facing; the sequence is TVQRMEVPIE…HRAKGLGMEN (160 aa). L-glutamate-binding residues include S674, S675, and E723. An N-linked (GlcNAc...) asparagine glycan is attached at N736. The chain crosses the membrane as a helical span at residues 805-825; sequence IGGIFVVLICGLIVAIFMAML. Residues 826-956 are Cytoplasmic-facing; that stretch reads EFLWTLRHSE…DKTTNSSEPE (131 aa). The segment at 931–956 is disordered; sequence LRARPSPARSEESLEWDKTTNSSEPE. Residues 939-948 show a composition bias toward basic and acidic residues; it reads RSEESLEWDK.

It belongs to the glutamate-gated ion channel (TC 1.A.10.1) family. GRIK4 subfamily. As to quaternary structure, homodimer. Can form functional heteromeric receptors with GRIK1, GRIK2 and GRIK3 subunits. Forms a heteromeric complex with GRIK2. In terms of tissue distribution, expressed in the hippocampus and cerebellum (at protein level).

It localises to the cell membrane. It is found in the postsynaptic cell membrane. The protein resides in the presynaptic cell membrane. Its function is as follows. Ionotropic glutamate receptor that functions as a cation-permeable ligand-gated ion channel. Cannot form functional channels on its own and produces channel activity only in heteromeric assembly with GRIK1, GRIK2 and GRIK3 subunits. This Mus musculus (Mouse) protein is Glutamate receptor ionotropic, kainate 4 (Grik4).